Here is a 177-residue protein sequence, read N- to C-terminus: R-phycoerythrin beta chain (177 aa).

C50 and C61 together coordinate phycourobilin. N72 bears the N4-methylasparagine mark. C82 and C158 together coordinate (2R,3E)-phycoerythrobilin.

This sequence belongs to the phycobiliprotein family. As to quaternary structure, heterodimer of an alpha and a beta chain. In terms of processing, contains two covalently linked phycoerythrobilin chromophores and one covalently linked phycourobilin chromophore.

It localises to the plastid. It is found in the chloroplast thylakoid membrane. Functionally, light-harvesting photosynthetic bile pigment-protein from the phycobiliprotein complex. In Porphyra purpurea (Red seaweed), this protein is R-phycoerythrin beta chain (cpeB).